Consider the following 365-residue polypeptide: Protein RecA (365 aa).

73–80 (GPESSGKT) lines the ATP pocket.

It belongs to the RecA family.

Its subcellular location is the cytoplasm. In terms of biological role, can catalyze the hydrolysis of ATP in the presence of single-stranded DNA, the ATP-dependent uptake of single-stranded DNA by duplex DNA, and the ATP-dependent hybridization of homologous single-stranded DNAs. It interacts with LexA causing its activation and leading to its autocatalytic cleavage. This is Protein RecA from Prochlorococcus marinus (strain MIT 9312).